Here is a 338-residue protein sequence, read N- to C-terminus: Aspartate carbamoyltransferase catalytic subunit (338 aa).

Residues arginine 59 and threonine 60 each coordinate carbamoyl phosphate. Lysine 87 contacts L-aspartate. Arginine 109, histidine 142, and glutamine 145 together coordinate carbamoyl phosphate. Residues arginine 182 and arginine 253 each coordinate L-aspartate. 2 residues coordinate carbamoyl phosphate: glycine 294 and proline 295.

The protein belongs to the aspartate/ornithine carbamoyltransferase superfamily. ATCase family. Heterododecamer (2C3:3R2) of six catalytic PyrB chains organized as two trimers (C3), and six regulatory PyrI chains organized as three dimers (R2).

It catalyses the reaction carbamoyl phosphate + L-aspartate = N-carbamoyl-L-aspartate + phosphate + H(+). It functions in the pathway pyrimidine metabolism; UMP biosynthesis via de novo pathway; (S)-dihydroorotate from bicarbonate: step 2/3. In terms of biological role, catalyzes the condensation of carbamoyl phosphate and aspartate to form carbamoyl aspartate and inorganic phosphate, the committed step in the de novo pyrimidine nucleotide biosynthesis pathway. The polypeptide is Aspartate carbamoyltransferase catalytic subunit (Prochlorococcus marinus (strain MIT 9515)).